The primary structure comprises 191 residues: Thymidine kinase (191 aa).

Residues 9–16 (GSMNSGKT) and 85–88 (DESQ) each bind ATP. Glutamate 86 acts as the Proton acceptor in catalysis. Zn(2+) is bound by residues cysteine 143, cysteine 146, cysteine 181, and cysteine 184.

This sequence belongs to the thymidine kinase family. Homotetramer.

It is found in the cytoplasm. It carries out the reaction thymidine + ATP = dTMP + ADP + H(+). This Listeria innocua serovar 6a (strain ATCC BAA-680 / CLIP 11262) protein is Thymidine kinase.